The chain runs to 347 residues: uncharacterized protein (347 aa).

This is an uncharacterized protein from Magallana gigas (Pacific oyster).